Reading from the N-terminus, the 119-residue chain is 5-hydroxyisourate hydrolase (119 aa).

Substrate-binding residues include His8, Arg47, and Tyr116.

This sequence belongs to the transthyretin family. 5-hydroxyisourate hydrolase subfamily. As to quaternary structure, homotetramer.

The enzyme catalyses 5-hydroxyisourate + H2O = 5-hydroxy-2-oxo-4-ureido-2,5-dihydro-1H-imidazole-5-carboxylate + H(+). It functions in the pathway purine metabolism; urate degradation; (S)-allantoin from urate: step 2/3. Its function is as follows. Catalyzes the hydrolysis of 5-hydroxyisourate (HIU) to 2-oxo-4-hydroxy-4-carboxy-5-ureidoimidazoline (OHCU). The protein is 5-hydroxyisourate hydrolase of Halalkalibacterium halodurans (strain ATCC BAA-125 / DSM 18197 / FERM 7344 / JCM 9153 / C-125) (Bacillus halodurans).